The sequence spans 211 residues: Thymidylate kinase (211 aa).

10–17 provides a ligand contact to ATP; that stretch reads GIDGSGKT.

The protein belongs to the thymidylate kinase family.

The enzyme catalyses dTMP + ATP = dTDP + ADP. Its function is as follows. Phosphorylation of dTMP to form dTDP in both de novo and salvage pathways of dTTP synthesis. In Prochlorococcus marinus (strain NATL1A), this protein is Thymidylate kinase.